A 600-amino-acid chain; its full sequence is UDP-sugar pyrophospharylase (600 aa).

Belongs to the USP family. Requires Mg(2+) as cofactor. Mn(2+) serves as cofactor. The N-terminus is blocked.

The enzyme catalyses a monosaccharide 1-phosphate + UTP + H(+) = a UDP-monosaccharide + diphosphate. Its activity is regulated as follows. Inhibited by a high concentration of pyrophosphate. May function as the terminal enzyme of the myo-inositol oxidation (MIO) pathway. May also play a role in the salvage pathway for synthesis of nucleotide sugars. This Pisum sativum (Garden pea) protein is UDP-sugar pyrophospharylase (USP).